The primary structure comprises 346 residues: Tubulin-specific chaperone C (346 aa).

Met1 carries the N-acetylmethionine modification. Residues 1-26 (MESVSCSAAAVRTGDMESQRDLSLVP) form a disordered region. A phosphoserine mark is found at Ser80 and Ser168. Positions 140 to 171 (KTRGKDAASSTKVDAAPGIPPAVESIQDSPLP) are disordered. Residues 171–323 (PKKAEGDLGP…NWNDVDDFNW (153 aa)) form the C-CAP/cofactor C-like domain.

The protein belongs to the TBCC family. Supercomplex made of cofactors A to E. Cofactors A and D function by capturing and stabilizing tubulin in a quasi-native conformation. Cofactor E binds to the cofactor D-tubulin complex; interaction with cofactor C then causes the release of tubulin polypeptides that are committed to the native state. In terms of tissue distribution, expressed in the retina. Expressed in the rod and cone photoreceptors, extending from the inner segments (IS), through the outer nuclear layer (ONL) and into the synapses in the outer plexiform layer (OPL). Strongly expressed to the photoreceptor connecting cilium at the tips of the IS (at protein level).

It is found in the cytoplasm. Functionally, tubulin-folding protein; involved in the final step of the tubulin folding pathway. The sequence is that of Tubulin-specific chaperone C (TBCC) from Homo sapiens (Human).